The primary structure comprises 356 residues: Serine/threonine-protein phosphatase 4 regulatory subunit 2 (356 aa).

Acidic residues predominate over residues 202–240 (NEGAGDDEDDDQDYVDEDSATSEDEEEDVEEEEEEEGPE). The interval 202-335 (NEGAGDDEDD…PQLTTSATNV (134 aa)) is disordered. Polar residues predominate over residues 326 to 335 (PQLTTSATNV).

It belongs to the PPP4R2 family. In terms of assembly, regulatory subunit (R2) of the histone H2A phosphatase complex (HTP-C) consisting of PPH3, PSY2 and PSY4.

It localises to the nucleus. In terms of biological role, regulatory subunit of the histone H2A phosphatase complex, which dephosphorylates H2AS128ph (gamma-H2A) that has been displaced from sites of DNA lesions in the double-stranded DNA break repair process. Dephosphorylation is necessary for efficient recovery from the DNA damage checkpoint. The sequence is that of Serine/threonine-protein phosphatase 4 regulatory subunit 2 (PSY4) from Eremothecium gossypii (strain ATCC 10895 / CBS 109.51 / FGSC 9923 / NRRL Y-1056) (Yeast).